The chain runs to 256 residues: Hydroxypyruvate/pyruvate aldolase (256 aa).

His48 (proton acceptor) is an active-site residue. Glu152 and Asp178 together coordinate a divalent metal cation.

It belongs to the HpcH/HpaI aldolase family. A divalent metal cation is required as a cofactor.

It catalyses the reaction D-glyceraldehyde + pyruvate = 2-dehydro-3-deoxy-L-galactonate. Functionally, aldolase which can catalyze in vitro the aldolisation reaction between hydroxypyruvate (HPA) or pyruvate (PA) and D-glyceraldehyde (D-GA). The condensation of pyruvate and D-glyceraldehyde produces 2-dehydro-3-deoxy-L-galactonate as the major product. Has weak activity with hydroxypyruvate and D-glyceraldehyde. This is Hydroxypyruvate/pyruvate aldolase from Roseobacter denitrificans (strain ATCC 33942 / OCh 114) (Erythrobacter sp. (strain OCh 114)).